A 175-amino-acid chain; its full sequence is uncharacterized protein (175 aa).

The helical transmembrane segment at 143–166 threads the bilayer; that stretch reads TCFLFCAFVTSIFIETDYSIFFLL.

It localises to the membrane. This is an uncharacterized protein from Saccharomyces cerevisiae (strain ATCC 204508 / S288c) (Baker's yeast).